A 305-amino-acid polypeptide reads, in one-letter code: Oxygen-dependent coproporphyrinogen-III oxidase (305 aa).

A substrate-binding site is contributed by S93. 2 residues coordinate a divalent metal cation: H97 and H107. H107 functions as the Proton donor in the catalytic mechanism. 109 to 111 (NVR) serves as a coordination point for substrate. A divalent metal cation is bound by residues H146 and H176. The interval 241 to 276 (YVEFNLVFDRGTLFGLQSGGRTESILMSLPPQVRWG) is important for dimerization. 259-261 (GGR) lines the substrate pocket.

It belongs to the aerobic coproporphyrinogen-III oxidase family. As to quaternary structure, homodimer. A divalent metal cation is required as a cofactor.

Its subcellular location is the cytoplasm. It catalyses the reaction coproporphyrinogen III + O2 + 2 H(+) = protoporphyrinogen IX + 2 CO2 + 2 H2O. It functions in the pathway porphyrin-containing compound metabolism; protoporphyrin-IX biosynthesis; protoporphyrinogen-IX from coproporphyrinogen-III (O2 route): step 1/1. In terms of biological role, involved in the heme biosynthesis. Catalyzes the aerobic oxidative decarboxylation of propionate groups of rings A and B of coproporphyrinogen-III to yield the vinyl groups in protoporphyrinogen-IX. The chain is Oxygen-dependent coproporphyrinogen-III oxidase from Pseudomonas paraeruginosa (strain DSM 24068 / PA7) (Pseudomonas aeruginosa (strain PA7)).